The sequence spans 1296 residues: DNA-directed RNA polymerase subunit beta' (1296 aa).

Residues Cys60, Cys62, Cys75, and Cys78 each contribute to the Zn(2+) site. Over residues 185–202 (EEEGGKAAEKRKLRDSAD) the composition is skewed to basic and acidic residues. A disordered region spans residues 185-204 (EEEGGKAAEKRKLRDSADRQ). Mg(2+) is bound by residues Asp535, Asp537, and Asp539. 4 residues coordinate Zn(2+): Cys877, Cys954, Cys961, and Cys964.

Belongs to the RNA polymerase beta' chain family. The RNAP catalytic core consists of 2 alpha, 1 beta, 1 beta' and 1 omega subunit. When a sigma factor is associated with the core the holoenzyme is formed, which can initiate transcription. It depends on Mg(2+) as a cofactor. The cofactor is Zn(2+).

It carries out the reaction RNA(n) + a ribonucleoside 5'-triphosphate = RNA(n+1) + diphosphate. DNA-dependent RNA polymerase catalyzes the transcription of DNA into RNA using the four ribonucleoside triphosphates as substrates. The protein is DNA-directed RNA polymerase subunit beta' of Kocuria rhizophila (strain ATCC 9341 / DSM 348 / NBRC 103217 / DC2201).